The chain runs to 352 residues: Pollen-specific protein SF21 (352 aa).

The protein belongs to the NDRG family. As to expression, pollen.

In Helianthus annuus (Common sunflower), this protein is Pollen-specific protein SF21 (SF21).